The sequence spans 185 residues: Photosystem I assembly protein Ycf4 (185 aa).

Transmembrane regions (helical) follow at residues Tyr-24 to Ser-44 and Ala-58 to Leu-78.

Belongs to the Ycf4 family.

Its subcellular location is the cellular thylakoid membrane. Seems to be required for the assembly of the photosystem I complex. This chain is Photosystem I assembly protein Ycf4, found in Prochlorococcus marinus (strain MIT 9215).